The chain runs to 245 residues: Bax inhibitor 1 (245 aa).

The Cytoplasmic segment spans residues 1 to 30; sequence MADTANYINDRFQTFMNGLGDRYEPYVREH. The helical transmembrane segment at 31–51 threads the bilayer; the sequence is LSKVYMVLGSTAAATAMGAML. Residues 52-55 lie on the Lumenal side of the membrane; sequence QMRD. Residues 56-76 traverse the membrane as a helical segment; that stretch reads FLDLGVLAAVATLVLVLGLHF. The Cytoplasmic segment spans residues 77-88; that stretch reads YKDDGKNYYTRL. Residues 89–109 traverse the membrane as a helical segment; that stretch reads GMLYAFGFCSGQTLGPLLGYI. The Lumenal portion of the chain corresponds to 110-115; it reads CSINPA. A helical membrane pass occupies residues 116–136; the sequence is IILSALTGTFVTFISLSLSAL. Residues 137–142 lie on the Cytoplasmic side of the membrane; that stretch reads LAEQGK. A helical transmembrane segment spans residues 143–163; that stretch reads YLYLGGMLVSVINTMALLSLF. The Lumenal portion of the chain corresponds to 164–169; the sequence is NMVFKS. A helical membrane pass occupies residues 170–190; sequence YFVQVTQLYVGVFVMAAFIVY. Residues 191–245 lie on the Cytoplasmic side of the membrane; it reads DTQNIVEKCRNGNRDVVQHALDLFFDVLSMFRRLLIILTQKEERKQNERRQNKTK.

This sequence belongs to the BI1 family.

It is found in the endoplasmic reticulum membrane. In terms of biological role, suppressor of apoptosis. Modulates unfolded protein response signaling. Negatively regulates autophagy and autophagosome formation, especially during periods of nutrient deprivation, and reduces cell survival during starvation. This Drosophila melanogaster (Fruit fly) protein is Bax inhibitor 1.